Reading from the N-terminus, the 475-residue chain is Sulfate adenylyltransferase subunit 1 (475 aa).

The tr-type G domain maps to 25 to 239 (KSLLRFLTCG…EVLETVEIQR (215 aa)). The interval 34 to 41 (GSVDDGKS) is G1. 34–41 (GSVDDGKS) contributes to the GTP binding site. Residues 92–96 (GITID) are G2. The interval 113-116 (DTPG) is G3. GTP is bound by residues 113–117 (DTPGH) and 168–171 (NKMD). The interval 168–171 (NKMD) is G4. Positions 206–208 (SAL) are G5.

Belongs to the TRAFAC class translation factor GTPase superfamily. Classic translation factor GTPase family. CysN/NodQ subfamily. As to quaternary structure, heterodimer composed of CysD, the smaller subunit, and CysN.

The enzyme catalyses sulfate + ATP + H(+) = adenosine 5'-phosphosulfate + diphosphate. It functions in the pathway sulfur metabolism; hydrogen sulfide biosynthesis; sulfite from sulfate: step 1/3. With CysD forms the ATP sulfurylase (ATPS) that catalyzes the adenylation of sulfate producing adenosine 5'-phosphosulfate (APS) and diphosphate, the first enzymatic step in sulfur assimilation pathway. APS synthesis involves the formation of a high-energy phosphoric-sulfuric acid anhydride bond driven by GTP hydrolysis by CysN coupled to ATP hydrolysis by CysD. The sequence is that of Sulfate adenylyltransferase subunit 1 from Escherichia coli (strain 55989 / EAEC).